The chain runs to 41 residues: Photosystem I reaction center subunit IX (41 aa).

The chain crosses the membrane as a helical span at residues 7–27 (YLSTAPVLLTLWMTFTAGFII).

This sequence belongs to the PsaJ family.

It localises to the plastid. Its subcellular location is the chloroplast thylakoid membrane. May help in the organization of the PsaE and PsaF subunits. The chain is Photosystem I reaction center subunit IX from Thalassiosira pseudonana (Marine diatom).